Consider the following 185-residue polypeptide: Acireductone dioxygenase (185 aa).

A disordered region spans residues 1–23 (MSRLSIHPEGNTNATSPAEPLLE). The Fe(2+) site is built by His102, His104, Glu108, and His146. Ni(2+) contacts are provided by His102, His104, Glu108, and His146.

The protein belongs to the acireductone dioxygenase (ARD) family. In terms of assembly, monomer. Fe(2+) serves as cofactor. Ni(2+) is required as a cofactor.

It catalyses the reaction 1,2-dihydroxy-5-(methylsulfanyl)pent-1-en-3-one + O2 = 3-(methylsulfanyl)propanoate + CO + formate + 2 H(+). The enzyme catalyses 1,2-dihydroxy-5-(methylsulfanyl)pent-1-en-3-one + O2 = 4-methylsulfanyl-2-oxobutanoate + formate + 2 H(+). The protein operates within amino-acid biosynthesis; L-methionine biosynthesis via salvage pathway; L-methionine from S-methyl-5-thio-alpha-D-ribose 1-phosphate: step 5/6. Catalyzes 2 different reactions between oxygen and the acireductone 1,2-dihydroxy-3-keto-5-methylthiopentene (DHK-MTPene) depending upon the metal bound in the active site. Fe-containing acireductone dioxygenase (Fe-ARD) produces formate and 2-keto-4-methylthiobutyrate (KMTB), the alpha-ketoacid precursor of methionine in the methionine recycle pathway. Ni-containing acireductone dioxygenase (Ni-ARD) produces methylthiopropionate, carbon monoxide and formate, and does not lie on the methionine recycle pathway. The chain is Acireductone dioxygenase from Prochlorococcus marinus (strain MIT 9303).